The sequence spans 157 residues: MVSGLINENPIIYPKKERRLRTDTSITDELTPEPIDQLEIFDHIRDIKDPEHPNTLEDLRVVTEDSVEVDDENSYVRVTFTPTVEHCSMATVIGLCVRVKLLRSLPSRYKIDIRVAPGSHATEDALNKQLNDKERVAAALENPNLVEMVDECLPSEE.

Belongs to the MIP18 family. In terms of assembly, part of a complex formed of AE7, CIA1, MMS19 and NAR1. Interacts with CIA1 and MMS19, but not with NAR1. As to expression, expressed in the embryo, shoot apical meristem, leaf primordia, inflorescence and all floral organs.

Its subcellular location is the nucleus. The protein resides in the cytoplasm. Central member of the cytosolic iron-sulfur (Fe-S) protein assembly (CIA) pathway. Involved in leaf polarity formation. Promotes leaf adaxial identity. May play a role in the cell cycle progression and is required for cell proliferation. The chain is Protein AE7 from Arabidopsis thaliana (Mouse-ear cress).